A 106-amino-acid polypeptide reads, in one-letter code: Iron-sulfur cluster assembly protein CyaY (106 aa).

Belongs to the frataxin family.

Its function is as follows. Involved in iron-sulfur (Fe-S) cluster assembly. May act as a regulator of Fe-S biogenesis. The sequence is that of Iron-sulfur cluster assembly protein CyaY from Shigella flexneri.